Consider the following 31-residue polypeptide: Photosystem II reaction center protein T (31 aa).

Residues 3–23 (ALVYTFLLISTLGIIFFGIFF) form a helical membrane-spanning segment.

This sequence belongs to the PsbT family. In terms of assembly, PSII is composed of 1 copy each of membrane proteins PsbA, PsbB, PsbC, PsbD, PsbE, PsbF, PsbH, PsbI, PsbJ, PsbK, PsbL, PsbM, PsbT, PsbY, PsbZ, Psb30/Ycf12, at least 3 peripheral proteins of the oxygen-evolving complex and a large number of cofactors. It forms dimeric complexes.

The protein resides in the plastid. Its subcellular location is the chloroplast thylakoid membrane. Functionally, found at the monomer-monomer interface of the photosystem II (PS II) dimer, plays a role in assembly and dimerization of PSII. PSII is a light-driven water plastoquinone oxidoreductase, using light energy to abstract electrons from H(2)O, generating a proton gradient subsequently used for ATP formation. The sequence is that of Photosystem II reaction center protein T from Nephroselmis olivacea (Green alga).